The sequence spans 234 residues: tRNA1(Val) (adenine(37)-N6)-methyltransferase (234 aa).

This sequence belongs to the methyltransferase superfamily. tRNA (adenine-N(6)-)-methyltransferase family.

The protein resides in the cytoplasm. The catalysed reaction is adenosine(37) in tRNA1(Val) + S-adenosyl-L-methionine = N(6)-methyladenosine(37) in tRNA1(Val) + S-adenosyl-L-homocysteine + H(+). Specifically methylates the adenine in position 37 of tRNA(1)(Val) (anticodon cmo5UAC). The sequence is that of tRNA1(Val) (adenine(37)-N6)-methyltransferase from Aliivibrio fischeri (strain MJ11) (Vibrio fischeri).